Reading from the N-terminus, the 232-residue chain is Orotate phosphoribosyltransferase (232 aa).

Residues Arg-107, Lys-108, Lys-111, His-113, and 133-141 (EDLTTAGGS) each bind 5-phospho-alpha-D-ribose 1-diphosphate. Thr-137 contributes to the orotate binding site.

It belongs to the purine/pyrimidine phosphoribosyltransferase family. PyrE subfamily. As to quaternary structure, homodimer. Mg(2+) is required as a cofactor.

It carries out the reaction orotidine 5'-phosphate + diphosphate = orotate + 5-phospho-alpha-D-ribose 1-diphosphate. Its pathway is pyrimidine metabolism; UMP biosynthesis via de novo pathway; UMP from orotate: step 1/2. Functionally, catalyzes the transfer of a ribosyl phosphate group from 5-phosphoribose 1-diphosphate to orotate, leading to the formation of orotidine monophosphate (OMP). This is Orotate phosphoribosyltransferase from Rhizobium meliloti (strain 1021) (Ensifer meliloti).